An 820-amino-acid polypeptide reads, in one-letter code: Pentatricopeptide repeat-containing protein At3g22150, chloroplastic (820 aa).

A disordered region spans residues 1–42 (MAGSALPLPPPPPLSLQSPSQNQTRHSSTFSPPTLTPQTPSI). A chloroplast-targeting transit peptide spans 1 to 50 (MAGSALPLPPPPPLSLQSPSQNQTRHSSTFSPPTLTPQTPSIRSRLSKIC). A compositionally biased stretch (polar residues) spans 22–42 (NQTRHSSTFSPPTLTPQTPSI). PPR repeat units lie at residues 69–99 (TTVLWNTIIIGFICNNLPHEALLFYSRMKKT), 106–136 (DAYTYSSTLKACAETKNLKAGKAVHCHLIRC), 141–177 (SRVVHNSLMNMYVSCLNAPDCFEYDVVRKVFDNMRRK), 178–212 (NVVAWNTLISWYVKTGRNAEACRQFGIMMRMEVKP), 213–247 (SPVSFVNVFPAVSISRSIKKANVFYGLMLKLGDEY), 250–284 (DLFVVSSAISMYAELGDIESSRRVFDSCVERNIEV), 285–316 (WNTMIGVYVQNDCLVESIELFLEAIGSKEIVS), 317–347 (DEVTYLLAASAVSALQQVELGRQFHGFVSKN), 352–382 (PIVIVNSLMVMYSRCGSVHKSFGVFLSMRER), 383–417 (DVVSWNTMISAFVQNGLDDEGLMLVYEMQKQGFKI), 418–452 (DYITVTALLSAASNLRNKEIGKQTHAFLIRQGIQF), 485–519 (DQATWNSMISGYTQNGHTEKTFLVFRKMLEQNIRP), 520–550 (NAVTVASILPACSQIGSVDLGKQLHGFSIRQ), 555–585 (NVFVASALVDMYSKAGAIKYAEDMFSQTKER), 586–620 (NSVTYTTMILGYGQHGMGERAISLFLSMQESGIKP), 621–651 (DAITFVAVLSACSYSGLIDEGLKIFEEMREV), and 657–691 (SSEHYCCITDMLGRVGRVNEAYEFVKGLGEEGNIA). Residues 693-770 (LWGSLLGSCK…EVGRSGIEIA (78 aa)) form a type E motif region. A type E(+) motif region spans residues 771–801 (GYVNCFVSRDQEHPHSSEIYDVIDGLAKDMR).

This sequence belongs to the PPR family. PCMP-E subfamily.

The protein resides in the plastid. It localises to the chloroplast. In Arabidopsis thaliana (Mouse-ear cress), this protein is Pentatricopeptide repeat-containing protein At3g22150, chloroplastic (PCMP-E95).